The primary structure comprises 784 residues: MIHPVRRALAVAASRAPRQFLAAASRTTSVRSVRAAAASGSYYSTTSRRLQDAFPSQLENLASSTLPKVVPQVPQTLTEKIVQRYSVGLAPGKKVKSGDYVTLQPHHCMTHDNSWPVAMKFMSIGASKIHDNRQVVMTLDHDVQNKSEANLKKYRQIEEFANTHGVDFYPAGRGIGHQIMVEEGYAWPGTVTVASDSHSNMYGGVGCLGTPMVRTDAASIWATGKTWWQIPPIAKVTFTGLLPPGVTGKDVIVALCGLFNNDDVLNHAIEFTGAEETMRSIPVDDRLTIANMTTEWGALSGLFPIDAVLASWMRAKATVTAMEHPELGDKAKFTHAKIDALLENPLVADPGATYAKQLYLNLSTLSPFVAGPNSVKIATPLKDLEAQNLKLDKAYLVSCTNSRASDIAAAARVFKDAAADNNGVIPKVAPGVKFYIAAASLLEQKQAEDSGDWQVLLDAGAEPLPSGCGPCIGLGTGLLEPGEIGISASNRNFKGRMGSTDAKAYLASPEVVAASALKGKIAGPGWYQKPEGVEKVIIGEGNGVVEQDKAMSIEDALDKIIAEAESLIANAEAGLTPESTSSSSSSSSSSEEESLTEILPGFPEAISGEIIFCDADNINTDGIYPGKYTYQDNITPAKMAEVCMENYDASFGSIARAGDILVTGFNFGCGSSREQAATAILAKQIPLVVSGSFGNIFSRNSINNALMGVEVPKLVQRLREEFGDKVATRRTGWKLTWDVRRSKVVVEEASGKKWEQKVGELPPNVQEIIARGGLEKWVKSQIEA.

The transit peptide at 1-32 (MIHPVRRALAVAASRAPRQFLAAASRTTSVRS) directs the protein to the mitochondrion. [4Fe-4S] cluster-binding residues include Cys-399, Cys-468, and Cys-471. Residues 572 to 596 (EAGLTPESTSSSSSSSSSSEEESLT) form a disordered region. A compositionally biased stretch (low complexity) spans 578 to 589 (ESTSSSSSSSSS).

It belongs to the aconitase/IPM isomerase family. Requires [4Fe-4S] cluster as cofactor.

It is found in the mitochondrion. The catalysed reaction is (2R,3S)-homoisocitrate = cis-homoaconitate + H2O. The protein operates within amino-acid biosynthesis; L-lysine biosynthesis via AAA pathway; L-alpha-aminoadipate from 2-oxoglutarate: step 3/5. Its function is as follows. Catalyzes the reversible hydration of cis-homoaconitate to (2R,3S)-homoisocitrate, a step in the alpha-aminoadipate pathway for lysine biosynthesis. The polypeptide is Homoaconitase, mitochondrial (lys-4) (Neurospora crassa (strain ATCC 24698 / 74-OR23-1A / CBS 708.71 / DSM 1257 / FGSC 987)).